Reading from the N-terminus, the 156-residue chain is UPF0039 protein Mb2876c (156 aa).

The N-acetyltransferase domain occupies 8–150 (VWAKDLDARA…PHVPMLRPGS (143 aa)).

This sequence belongs to the UPF0039 (ElaA) family.

The sequence is that of UPF0039 protein Mb2876c from Mycobacterium bovis (strain ATCC BAA-935 / AF2122/97).